We begin with the raw amino-acid sequence, 608 residues long: Sensor protein kinase WalK (608 aa).

Transmembrane regions (helical) follow at residues 14–34 (LVIVYVLLIIIGMQIIGLYFT) and 182–202 (IFIIGTAISLFITVILGFFIA). In terms of domain architecture, HAMP spans 203–255 (RTITRPITDMRNQTVEMSKGNYTQRVKIYGNDEIGELALAFNNLSKRVQEAQA). Residues 260–330 (EKRRLDSVIT…EIQENNDSFL (71 aa)) enclose the PAS domain. Residues 324–377 (ENNDSFLLDINEDEGIIARVNFSTIVQETGFVTGYIAVLHDVTEQQQVERERRE) enclose the PAC domain. One can recognise a Histidine kinase domain in the interval 381–599 (NVSHELRTPL…SIFITLPCEV (219 aa)). A Phosphohistidine; by autocatalysis modification is found at H384.

Autophosphorylated.

It is found in the cell membrane. The enzyme catalyses ATP + protein L-histidine = ADP + protein N-phospho-L-histidine.. In terms of biological role, member of the two-component regulatory system WalK/WalR. WalK functions as a sensor protein kinase which is autophosphorylated at a histidine residue and transfers its phosphate group to WalR. The protein is Sensor protein kinase WalK (walK) of Staphylococcus haemolyticus (strain JCSC1435).